The primary structure comprises 309 residues: Homoserine O-succinyltransferase (309 aa).

The active-site Acyl-thioester intermediate is the C142. Positions 163 and 192 each coordinate substrate. The active-site Proton acceptor is the H235. Residue E237 is part of the active site. R249 serves as a coordination point for substrate.

It belongs to the MetA family.

Its subcellular location is the cytoplasm. The enzyme catalyses L-homoserine + succinyl-CoA = O-succinyl-L-homoserine + CoA. It participates in amino-acid biosynthesis; L-methionine biosynthesis via de novo pathway; O-succinyl-L-homoserine from L-homoserine: step 1/1. Its function is as follows. Transfers a succinyl group from succinyl-CoA to L-homoserine, forming succinyl-L-homoserine. This Photorhabdus laumondii subsp. laumondii (strain DSM 15139 / CIP 105565 / TT01) (Photorhabdus luminescens subsp. laumondii) protein is Homoserine O-succinyltransferase.